Reading from the N-terminus, the 431-residue chain is Enolase (431 aa).

Residue Q168 participates in (2R)-2-phosphoglycerate binding. E210 (proton donor) is an active-site residue. Mg(2+) is bound by residues D247, E291, and D318. 4 residues coordinate (2R)-2-phosphoglycerate: K343, R372, S373, and K394. Catalysis depends on K343, which acts as the Proton acceptor.

This sequence belongs to the enolase family. Component of the RNA degradosome, a multiprotein complex involved in RNA processing and mRNA degradation. Requires Mg(2+) as cofactor.

The protein localises to the cytoplasm. It localises to the secreted. The protein resides in the cell surface. The enzyme catalyses (2R)-2-phosphoglycerate = phosphoenolpyruvate + H2O. It functions in the pathway carbohydrate degradation; glycolysis; pyruvate from D-glyceraldehyde 3-phosphate: step 4/5. In terms of biological role, catalyzes the reversible conversion of 2-phosphoglycerate (2-PG) into phosphoenolpyruvate (PEP). It is essential for the degradation of carbohydrates via glycolysis. The chain is Enolase from Acinetobacter baumannii (strain AYE).